The chain runs to 329 residues: Ankyrin repeat and SOCS box protein 5 (329 aa).

ANK repeat units lie at residues 69 to 98, 102 to 131, 135 to 164, 167 to 196, 200 to 229, and 232 to 261; these read ADRS…NVNA, DHVT…NVNA, DGVT…KAQL, CLPS…DVDQ, HLGT…DVQK, and YWDT…DINA. Residues 278 to 329 enclose the SOCS box domain; it reads MVERILLQHEATPSSLYQLCRLCIRSYIGKPRLHLIPQLQLPTLLKNFLQYR.

This sequence belongs to the ankyrin SOCS box (ASB) family.

The protein operates within protein modification; protein ubiquitination. May be a substrate-recognition component of a SCF-like ECS (Elongin-Cullin-SOCS-box protein) E3 ubiquitin-protein ligase complex which mediates the ubiquitination and subsequent proteasomal degradation of target proteins. May play a role in the initiation of arteriogenesis. This Homo sapiens (Human) protein is Ankyrin repeat and SOCS box protein 5 (ASB5).